The sequence spans 385 residues: Acetate kinase (385 aa).

Position 8 (Asn-8) interacts with Mg(2+). ATP is bound at residue Lys-15. Substrate is bound at residue Arg-85. The Proton donor/acceptor role is filled by Asp-142. ATP contacts are provided by residues 200-204, 275-277, and 323-327; these read HLGNG, DMR, and GIGEN. Glu-373 contributes to the Mg(2+) binding site.

This sequence belongs to the acetokinase family. As to quaternary structure, homodimer. The cofactor is Mg(2+). Mn(2+) serves as cofactor.

It localises to the cytoplasm. The enzyme catalyses acetate + ATP = acetyl phosphate + ADP. The protein operates within metabolic intermediate biosynthesis; acetyl-CoA biosynthesis; acetyl-CoA from acetate: step 1/2. Functionally, catalyzes the formation of acetyl phosphate from acetate and ATP. Can also catalyze the reverse reaction. This Francisella tularensis subsp. holarctica (strain OSU18) protein is Acetate kinase.